The following is a 445-amino-acid chain: tRNA(Ile)-lysidine synthase (445 aa).

19–24 (SGGIDS) contributes to the ATP binding site.

It belongs to the tRNA(Ile)-lysidine synthase family.

It is found in the cytoplasm. The catalysed reaction is cytidine(34) in tRNA(Ile2) + L-lysine + ATP = lysidine(34) in tRNA(Ile2) + AMP + diphosphate + H(+). Its function is as follows. Ligates lysine onto the cytidine present at position 34 of the AUA codon-specific tRNA(Ile) that contains the anticodon CAU, in an ATP-dependent manner. Cytidine is converted to lysidine, thus changing the amino acid specificity of the tRNA from methionine to isoleucine. In Buchnera aphidicola subsp. Schizaphis graminum (strain Sg), this protein is tRNA(Ile)-lysidine synthase.